The sequence spans 195 residues: 3-isopropylmalate dehydratase small subunit (195 aa).

Belongs to the LeuD family. LeuD type 1 subfamily. In terms of assembly, heterodimer of LeuC and LeuD.

The enzyme catalyses (2R,3S)-3-isopropylmalate = (2S)-2-isopropylmalate. It functions in the pathway amino-acid biosynthesis; L-leucine biosynthesis; L-leucine from 3-methyl-2-oxobutanoate: step 2/4. Catalyzes the isomerization between 2-isopropylmalate and 3-isopropylmalate, via the formation of 2-isopropylmaleate. The sequence is that of 3-isopropylmalate dehydratase small subunit from Oenococcus oeni (strain ATCC BAA-331 / PSU-1).